A 228-amino-acid polypeptide reads, in one-letter code: Geranylgeranylglyceryl phosphate synthase (228 aa).

Lys13 contacts sn-glycerol 1-phosphate. Mg(2+)-binding residues include Asp15 and Thr41. Residues 159-164 (YIEYSG), Gly189, and 209-210 (GN) each bind sn-glycerol 1-phosphate.

The protein belongs to the GGGP/HepGP synthase family. Group I subfamily. Mg(2+) is required as a cofactor.

The protein resides in the cytoplasm. The enzyme catalyses sn-glycerol 1-phosphate + (2E,6E,10E)-geranylgeranyl diphosphate = sn-3-O-(geranylgeranyl)glycerol 1-phosphate + diphosphate. It functions in the pathway membrane lipid metabolism; glycerophospholipid metabolism. Its function is as follows. Prenyltransferase that catalyzes the transfer of the geranylgeranyl moiety of geranylgeranyl diphosphate (GGPP) to the C3 hydroxyl of sn-glycerol-1-phosphate (G1P). This reaction is the first ether-bond-formation step in the biosynthesis of archaeal membrane lipids. The chain is Geranylgeranylglyceryl phosphate synthase from Methanospirillum hungatei JF-1 (strain ATCC 27890 / DSM 864 / NBRC 100397 / JF-1).